Consider the following 252-residue polypeptide: D-aminoacyl-tRNA deacylase (252 aa).

The protein belongs to the DtdA deacylase family. As to quaternary structure, monomer. Zn(2+) serves as cofactor.

The enzyme catalyses a D-aminoacyl-tRNA + H2O = a tRNA + a D-alpha-amino acid + H(+). It catalyses the reaction glycyl-tRNA(Ala) + H2O = tRNA(Ala) + glycine + H(+). Functionally, D-aminoacyl-tRNA deacylase with broad substrate specificity. By recycling D-aminoacyl-tRNA to D-amino acids and free tRNA molecules, this enzyme counteracts the toxicity associated with the formation of D-aminoacyl-tRNA entities in vivo. This Pyrobaculum neutrophilum (strain DSM 2338 / JCM 9278 / NBRC 100436 / V24Sta) (Thermoproteus neutrophilus) protein is D-aminoacyl-tRNA deacylase.